Consider the following 387-residue polypeptide: Exodeoxyribonuclease 7 large subunit (387 aa).

This sequence belongs to the XseA family. As to quaternary structure, heterooligomer composed of large and small subunits.

It localises to the cytoplasm. It carries out the reaction Exonucleolytic cleavage in either 5'- to 3'- or 3'- to 5'-direction to yield nucleoside 5'-phosphates.. Bidirectionally degrades single-stranded DNA into large acid-insoluble oligonucleotides, which are then degraded further into small acid-soluble oligonucleotides. The chain is Exodeoxyribonuclease 7 large subunit from Campylobacter jejuni (strain RM1221).